The primary structure comprises 180 residues: Pro-glucagon (180 aa).

Residues methionine 1 to glutamine 20 form the signal peptide. Residues threonine 26–threonine 59 are disordered. Serine 54 carries the post-translational modification Phosphoserine. Positions asparagine 84–alanine 89 are excised as a propeptide. A phosphoserine mark is found at serine 105 and serine 108. Arginine 127 bears the Arginine amide mark. A propeptide spanning residues aspartate 131–arginine 145 is cleaved from the precursor. Phosphoserine occurs at positions 150 and 152.

The protein belongs to the glucagon family. Proglucagon is post-translationally processed in a tissue-specific manner in pancreatic A cells and intestinal L cells. In pancreatic A cells, the major bioactive hormone is glucagon cleaved by PCSK2/PC2. In the intestinal L cells PCSK1/PC1 liberates GLP-1, GLP-2, glicentin and oxyntomodulin. GLP-1 is further N-terminally truncated by post-translational processing in the intestinal L cells resulting in GLP-1(7-37) GLP-1-(7-36)amide. The C-terminal amidation is neither important for the metabolism of GLP-1 nor for its effects on the endocrine pancreas. In terms of tissue distribution, secreted in the A cells of the islets of Langerhans. Secreted in the A cells of the islets of Langerhans. Secreted from enteroendocrine L cells throughout the gastrointestinal tract. Also secreted in selected neurons in the brain. As to expression, secreted from enteroendocrine cells throughout the gastrointestinal tract. Also secreted in selected neurons in the brain. In terms of tissue distribution, secreted from enteroendocrine cells throughout the gastrointestinal tract.

It localises to the secreted. Its function is as follows. Plays a key role in glucose metabolism and homeostasis. Regulates blood glucose by increasing gluconeogenesis and decreasing glycolysis. A counterregulatory hormone of insulin, raises plasma glucose levels in response to insulin-induced hypoglycemia. Plays an important role in initiating and maintaining hyperglycemic conditions in diabetes. In terms of biological role, potent stimulator of glucose-dependent insulin release. Also stimulates insulin release in response to IL6. Plays important roles on gastric motility and the suppression of plasma glucagon levels. May be involved in the suppression of satiety and stimulation of glucose disposal in peripheral tissues, independent of the actions of insulin. Has growth-promoting activities on intestinal epithelium. May also regulate the hypothalamic pituitary axis (HPA) via effects on LH, TSH, CRH, oxytocin, and vasopressin secretion. Increases islet mass through stimulation of islet neogenesis and pancreatic beta cell proliferation. Inhibits beta cell apoptosis. Stimulates intestinal growth and up-regulates villus height in the small intestine, concomitant with increased crypt cell proliferation and decreased enterocyte apoptosis. The gastrointestinal tract, from the stomach to the colon is the principal target for GLP-2 action. Plays a key role in nutrient homeostasis, enhancing nutrient assimilation through enhanced gastrointestinal function, as well as increasing nutrient disposal. Stimulates intestinal glucose transport and decreases mucosal permeability. Functionally, significantly reduces food intake. Inhibits gastric emptying in humans. Suppression of gastric emptying may lead to increased gastric distension, which may contribute to satiety by causing a sensation of fullness. Its function is as follows. May modulate gastric acid secretion and the gastro-pyloro-duodenal activity. May play an important role in intestinal mucosal growth in the early period of life. This chain is Pro-glucagon, found in Homo sapiens (Human).